Here is a 238-residue protein sequence, read N- to C-terminus: ATP-dependent dethiobiotin synthetase BioD (238 aa).

Residue 12–17 (EVGKTV) coordinates ATP. Thr16 provides a ligand contact to Mg(2+). Residue Lys37 is part of the active site. Thr41 provides a ligand contact to substrate. ATP-binding positions include Asp50, 109-112 (EGAG), 170-171 (GS), and 200-202 (PAG). Asp50 and Glu109 together coordinate Mg(2+).

This sequence belongs to the dethiobiotin synthetase family. In terms of assembly, homodimer. It depends on Mg(2+) as a cofactor.

It localises to the cytoplasm. The catalysed reaction is (7R,8S)-7,8-diammoniononanoate + CO2 + ATP = (4R,5S)-dethiobiotin + ADP + phosphate + 3 H(+). It participates in cofactor biosynthesis; biotin biosynthesis; biotin from 7,8-diaminononanoate: step 1/2. Functionally, catalyzes a mechanistically unusual reaction, the ATP-dependent insertion of CO2 between the N7 and N8 nitrogen atoms of 7,8-diaminopelargonic acid (DAPA, also called 7,8-diammoniononanoate) to form a ureido ring. This chain is ATP-dependent dethiobiotin synthetase BioD, found in Streptomyces coelicolor (strain ATCC BAA-471 / A3(2) / M145).